Consider the following 462-residue polypeptide: MSKLWGGRFTEEAEAWVEEFGASISFDKQLVSQDIKGSIAHVTMLAKQGIVTKEEAEKIKIGLQYLLEEAKQNKLNFSVEAEDIHLNIEKMLIERIGEVGGKLHTGRSRNDQVATDMHLYLKEKVEDIIKATKQLQTVLVHQAENNIETIMPGYTHLQRAQPISFAHHILAYFWMLERDVNRYEDSLKRINISPLGAGALAGTTFPIDREYSAELLGFNGIYENSLDAVSDRDFILEFLSNSSMLMMHLSRFCEELILWSSQEFQFIEMSDQYATGSSIMPQKKNPDMAELIRGKTGRVYGNLFSLLTVMKGLPLAYNKDLQEDKEGMFDTVKTVEGCLHIMAGMIETMTVNKEKMGQAVTQDFSNATEIADYLASKGLPFRQAHEIVGKLVLHCTQKGIYLLDVPLETYKEMSPLFEEDLYEVLSPYAAVKRRNSAGGTGFEQIEKALEKAKGLAIEFVGI.

This sequence belongs to the lyase 1 family. Argininosuccinate lyase subfamily.

It is found in the cytoplasm. The catalysed reaction is 2-(N(omega)-L-arginino)succinate = fumarate + L-arginine. It functions in the pathway amino-acid biosynthesis; L-arginine biosynthesis; L-arginine from L-ornithine and carbamoyl phosphate: step 3/3. This Bacillus mycoides (strain KBAB4) (Bacillus weihenstephanensis) protein is Argininosuccinate lyase.